A 228-amino-acid polypeptide reads, in one-letter code: Large ribosomal subunit protein bL25 (228 aa).

Positions 198 to 228 (AAIAEAQSAEAAEEKAEAEAEATNEKNDTEE) are disordered. Over residues 209-228 (AEEKAEAEAEATNEKNDTEE) the composition is skewed to basic and acidic residues.

It belongs to the bacterial ribosomal protein bL25 family. CTC subfamily. As to quaternary structure, part of the 50S ribosomal subunit; part of the 5S rRNA/L5/L18/L25 subcomplex. Contacts the 5S rRNA. Binds to the 5S rRNA independently of L5 and L18.

In terms of biological role, this is one of the proteins that binds to the 5S RNA in the ribosome where it forms part of the central protuberance. In Methylorubrum populi (strain ATCC BAA-705 / NCIMB 13946 / BJ001) (Methylobacterium populi), this protein is Large ribosomal subunit protein bL25.